The primary structure comprises 464 residues: V-type ATP synthase beta chain (464 aa).

This sequence belongs to the ATPase alpha/beta chains family.

Functionally, produces ATP from ADP in the presence of a proton gradient across the membrane. The V-type beta chain is a regulatory subunit. The protein is V-type ATP synthase beta chain of Streptococcus gordonii (strain Challis / ATCC 35105 / BCRC 15272 / CH1 / DL1 / V288).